The chain runs to 660 residues: Acetyl-coenzyme A synthetase (660 aa).

Residues 197–200 and Thr-317 each bind CoA; that span reads RGGK. ATP is bound by residues 397–399, 421–426, Asp-512, and Arg-528; these read GEP and DTWWQT. Residue Ser-536 coordinates CoA. An ATP-binding site is contributed by Arg-539. Mg(2+)-binding residues include Val-550 and Val-555. Lys-625 is subject to N6-acetyllysine.

The protein belongs to the ATP-dependent AMP-binding enzyme family. The cofactor is Mg(2+). Post-translationally, acetylated. Deacetylation by the SIR2-homolog deacetylase activates the enzyme.

It carries out the reaction acetate + ATP + CoA = acetyl-CoA + AMP + diphosphate. Its function is as follows. Catalyzes the conversion of acetate into acetyl-CoA (AcCoA), an essential intermediate at the junction of anabolic and catabolic pathways. AcsA undergoes a two-step reaction. In the first half reaction, AcsA combines acetate with ATP to form acetyl-adenylate (AcAMP) intermediate. In the second half reaction, it can then transfer the acetyl group from AcAMP to the sulfhydryl group of CoA, forming the product AcCoA. The chain is Acetyl-coenzyme A synthetase from Paraburkholderia phymatum (strain DSM 17167 / CIP 108236 / LMG 21445 / STM815) (Burkholderia phymatum).